Consider the following 423-residue polypeptide: Serine--tRNA ligase (423 aa).

An L-serine-binding site is contributed by 229-231; that stretch reads TAE. 260–262 contacts ATP; sequence RKE. Position 283 (Glu283) interacts with L-serine. Residue 347 to 350 participates in ATP binding; the sequence is EVSS. Ser383 is an L-serine binding site.

This sequence belongs to the class-II aminoacyl-tRNA synthetase family. Type-1 seryl-tRNA synthetase subfamily. As to quaternary structure, homodimer. The tRNA molecule binds across the dimer.

Its subcellular location is the cytoplasm. It catalyses the reaction tRNA(Ser) + L-serine + ATP = L-seryl-tRNA(Ser) + AMP + diphosphate + H(+). It carries out the reaction tRNA(Sec) + L-serine + ATP = L-seryl-tRNA(Sec) + AMP + diphosphate + H(+). It participates in aminoacyl-tRNA biosynthesis; selenocysteinyl-tRNA(Sec) biosynthesis; L-seryl-tRNA(Sec) from L-serine and tRNA(Sec): step 1/1. Functionally, catalyzes the attachment of serine to tRNA(Ser). Is also able to aminoacylate tRNA(Sec) with serine, to form the misacylated tRNA L-seryl-tRNA(Sec), which will be further converted into selenocysteinyl-tRNA(Sec). The protein is Serine--tRNA ligase of Chloroflexus aurantiacus (strain ATCC 29366 / DSM 635 / J-10-fl).